Consider the following 635-residue polypeptide: MSEHGADLRFDSPEKEIKHWKSKVADMQDALRETESSLQDFVESSKELEQEMEKELSASNKTISDLKRRNEQLSGDLEDWKSKYSRALSEHNATLTTLQKELGQLRESVDIYKAKLRDTELTNDELENAERMVASSLADMEGKYNKTIEKTALLEEELIEKTRLDEENQRLKDELREMTEEMTILRDLVTRSRAISRADTMASSTYDDSTAPRSEQSFDSSPIKPSSAARATERPSSRQALSSPVTNRVPISRRLGAMGHNRRLSRDVRAAEAPSLAAVLDDSPTATTTSAAPTRSSTLSRRDPLAATPYHHGASTSHGLTSSPSARAQLRASVRAAARIGGAVSVSSAPRSTNLSANGGAAGSKRMMAEMISKMKALESRINSAKDLSRVVGPGDESAIPRPSSRMATIGSPSANGHNSIHMPTSTPRAPRASMDGNRTIGSSIPVPSRVRRPSSRMSERGTPPMPSLGLPRAQTPSSLHARGSSRADGPSPLPLHEFMDHDPASTLPHAARYAAAQASVAKRRTSMSGSGMSHSASHGSLAKVRSGSTLPRSTTPSTVAAPRVTQSSMTYYGAEASMSKRTPLSTRLASSHRNASSARGSINGPPSSWKTSAMPAQTLSRSRSSSLGSETETF.

Residues 14-192 are a coiled coil; it reads EKEIKHWKSK…TILRDLVTRS (179 aa). Disordered stretches follow at residues 35 to 63, 200 to 267, 279 to 328, 389 to 504, and 516 to 635; these read ESSLQDFVESSKELEQEMEKELSASNKTI, TMAS…LSRD, VLDD…SARA, SRVV…DHDP, and AAQA…TETF. Residues 43–56 show a composition bias toward basic and acidic residues; sequence ESSKELEQEMEKEL. Polar residues-rich tracts occupy residues 201-224 and 237-246; these read MASSTYDDSTAPRSEQSFDSSPIK and SRQALSSPVT. Low complexity predominate over residues 280 to 299; that stretch reads LDDSPTATTTSAAPTRSSTL. Composition is skewed to polar residues over residues 314-326 and 411-428; these read ASTSHGLTSSPSA and GSPSANGHNSIHMPTSTP. Residues 516–541 are compositionally biased toward low complexity; the sequence is AAQASVAKRRTSMSGSGMSHSASHGS. Composition is skewed to polar residues over residues 547 to 571 and 580 to 619; these read SGSTLPRSTTPSTVAAPRVTQSSMT and SKRTPLSTRLASSHRNASSARGSINGPPSSWKTSAMPAQT. A compositionally biased stretch (low complexity) spans 620 to 635; the sequence is LSRSRSSSLGSETETF.

This sequence belongs to the nudE family. Self-associates. Interacts with PAC1.

It localises to the cytoplasm. The protein resides in the cytoskeleton. Its function is as follows. Required for nuclear migration. In Mycosarcoma maydis (Corn smut fungus), this protein is Nuclear distribution protein nudE homolog 1 (NDE1).